The sequence spans 994 residues: Alanine--tRNA ligase, chloroplastic/mitochondrial (994 aa).

Residues 1 to 29 are disordered; that stretch reads MGGLKLPPQTLHGIHGGRRPLTAPSSKPS. 4 residues coordinate Zn(2+): H672, H676, C774, and H778.

This sequence belongs to the class-II aminoacyl-tRNA synthetase family. Monomer. Zn(2+) serves as cofactor.

The protein localises to the plastid. It is found in the chloroplast. Its subcellular location is the mitochondrion. The enzyme catalyses tRNA(Ala) + L-alanine + ATP = L-alanyl-tRNA(Ala) + AMP + diphosphate. In terms of biological role, catalyzes the attachment of alanine to tRNA(Ala) in a two-step reaction: alanine is first activated by ATP to form Ala-AMP and then transferred to the acceptor end of tRNA(Ala). Also edits incorrectly charged tRNA(Ala) via its editing domain. In Populus trichocarpa (Western balsam poplar), this protein is Alanine--tRNA ligase, chloroplastic/mitochondrial.